The chain runs to 97 residues: Co-chaperonin GroES (97 aa).

Belongs to the GroES chaperonin family. In terms of assembly, heptamer of 7 subunits arranged in a ring. Interacts with the chaperonin GroEL.

The protein resides in the cytoplasm. Its function is as follows. Together with the chaperonin GroEL, plays an essential role in assisting protein folding. The GroEL-GroES system forms a nano-cage that allows encapsulation of the non-native substrate proteins and provides a physical environment optimized to promote and accelerate protein folding. GroES binds to the apical surface of the GroEL ring, thereby capping the opening of the GroEL channel. This Pseudomonas putida (strain ATCC 700007 / DSM 6899 / JCM 31910 / BCRC 17059 / LMG 24140 / F1) protein is Co-chaperonin GroES.